The sequence spans 852 residues: Metastasis-associated in colon cancer protein 1 (852 aa).

Serine 19 carries the phosphoserine modification. One can recognise a ZU5 domain in the interval 212–349; it reads VTIACKVNHQ…LSQVMYLVVA (138 aa). The 71-residue stretch at 549 to 619 folds into the SH3 domain; sequence NFSNYGVTLK…HCKNVKVISK (71 aa).

In terms of assembly, interacts with FASLG. In terms of tissue distribution, preferentially expressed in metastasizing tumors.

The protein localises to the cytoplasm. It is found in the nucleus. Its function is as follows. Acts as a transcription activator for MET and as a key regulator of HGF-MET signaling. Promotes cell motility, proliferation and hepatocyte growth factor (HGF)-dependent scattering in vitro and tumor growth and metastasis in vivo. The chain is Metastasis-associated in colon cancer protein 1 (MACC1) from Homo sapiens (Human).